We begin with the raw amino-acid sequence, 373 residues long: Homoserine O-acetyltransferase (373 aa).

The AB hydrolase-1 domain occupies 46–355 (NAILICHPLT…NPNGHDSFLL (310 aa)). Ser-151 serves as the catalytic Nucleophile. Residue Arg-221 participates in substrate binding. Catalysis depends on residues Asp-317 and His-350. A substrate-binding site is contributed by Asp-351.

The protein belongs to the AB hydrolase superfamily. MetX family. As to quaternary structure, homodimer.

It localises to the cytoplasm. It catalyses the reaction L-homoserine + acetyl-CoA = O-acetyl-L-homoserine + CoA. The protein operates within amino-acid biosynthesis; L-methionine biosynthesis via de novo pathway; O-acetyl-L-homoserine from L-homoserine: step 1/1. Its function is as follows. Transfers an acetyl group from acetyl-CoA to L-homoserine, forming acetyl-L-homoserine. The chain is Homoserine O-acetyltransferase from Zymomonas mobilis subsp. mobilis (strain ATCC 31821 / ZM4 / CP4).